The following is a 144-amino-acid chain: Benzoylsuccinyl-CoA thiolase subunit BbsA (144 aa).

The Zn(2+) site is built by cysteine 40, cysteine 43, cysteine 54, and cysteine 57.

Belongs to the BbsA family. As to quaternary structure, heterotetramer composed of two BbsA subunits and two BbsB subunits. BbsA forms homodimeric subcomplexes. Both BbsA and BbsB are essential for enzymatic activity.

The catalysed reaction is (S)-2-benzoylsuccinyl-CoA + CoA = benzoyl-CoA + succinyl-CoA. It functions in the pathway xenobiotic degradation; toluene degradation. In terms of biological role, component of the BbsAB thiolase complex, which catalyzes the thiolytic cleavage of (S)-2-benzoylsuccinyl-CoA to succinyl-CoA and benzoyl-CoA, the final step of anaerobic toluene metabolism. The BbsA subunit critically contributes to an induced-fit process for productive binding of a CoA substrate into the active site of BbsB. This chain is Benzoylsuccinyl-CoA thiolase subunit BbsA, found in Thauera aromatica.